Reading from the N-terminus, the 212-residue chain is MKQLFRQWYDLSEIKKELTTRNWFPATSGNISIKVSHEPLTFLITASGKDKTKTTPDDFLLVDHLGVPVLETELRPSAETILHTHIYNNTNAGCVLHVHTTDNNVITNLYSDAVTLQNQEIIKALDIWEEGATINIPIIENHAHIPTLGENFRKHIQGDSGAVLIRNHGITVWGRDSFDAKKRLEAYEFLFQFHIKLLSIQGGVSNGANSYS.

H97 and H99 together coordinate Zn(2+).

Belongs to the aldolase class II family. MtnB subfamily. In terms of assembly, homotetramer. Requires Zn(2+) as cofactor.

It catalyses the reaction 5-(methylsulfanyl)-D-ribulose 1-phosphate = 5-methylsulfanyl-2,3-dioxopentyl phosphate + H2O. The protein operates within amino-acid biosynthesis; L-methionine biosynthesis via salvage pathway; L-methionine from S-methyl-5-thio-alpha-D-ribose 1-phosphate: step 2/6. Its function is as follows. Catalyzes the dehydration of methylthioribulose-1-phosphate (MTRu-1-P) into 2,3-diketo-5-methylthiopentyl-1-phosphate (DK-MTP-1-P). The polypeptide is Methylthioribulose-1-phosphate dehydratase (Bacillus cereus (strain ATCC 10987 / NRS 248)).